We begin with the raw amino-acid sequence, 661 residues long: Probable urea active transporter 3 (661 aa).

A run of 15 helical transmembrane segments spans residues Gly-13–Leu-33, Gly-56–Ala-76, Gly-86–Leu-106, Ala-132–Gly-152, Val-165–Leu-185, Val-197–Ile-217, Ala-251–Ser-271, Tyr-288–Leu-308, Ala-352–Phe-372, Val-397–Asn-417, Ile-419–Phe-439, Gly-454–Cys-474, Val-495–Phe-515, Ile-556–Met-576, and Trp-591–Leu-611.

Belongs to the sodium:solute symporter (SSF) (TC 2.A.21) family.

The protein localises to the membrane. It is found in the golgi apparatus membrane. Its function is as follows. Involved in active transport of urea. This chain is Probable urea active transporter 3 (dur3-3), found in Schizosaccharomyces pombe (strain 972 / ATCC 24843) (Fission yeast).